We begin with the raw amino-acid sequence, 179 residues long: ATP-dependent protease subunit HslV (179 aa).

Thr5 is a catalytic residue. Gly164, Cys167, and Thr170 together coordinate Na(+).

Belongs to the peptidase T1B family. HslV subfamily. In terms of assembly, a double ring-shaped homohexamer of HslV is capped on each side by a ring-shaped HslU homohexamer. The assembly of the HslU/HslV complex is dependent on binding of ATP.

It localises to the cytoplasm. The catalysed reaction is ATP-dependent cleavage of peptide bonds with broad specificity.. Allosterically activated by HslU binding. Protease subunit of a proteasome-like degradation complex believed to be a general protein degrading machinery. This Verminephrobacter eiseniae (strain EF01-2) protein is ATP-dependent protease subunit HslV.